Reading from the N-terminus, the 313-residue chain is Olfactory receptor 1M1 (313 aa).

Topologically, residues 1 to 25 (MEPRNQTSASQFILLGLSEKPEQET) are extracellular. N5 is a glycosylation site (N-linked (GlcNAc...) asparagine). A helical membrane pass occupies residues 26–49 (LLFSLFFCMYLVMVVGNLLIILAI). Topologically, residues 50–57 (SIDSHLHT) are cytoplasmic. A helical transmembrane segment spans residues 58 to 79 (PMYFFLANLSLVDFCLATNTIP). Residues 80-100 (KMLVSLQTGSKAISYPCCLIQ) lie on the Extracellular side of the membrane. An intrachain disulfide couples C97 to C189. Residues 101–120 (MYFFHFFGIVDSVIIAMMAY) form a helical membrane-spanning segment. The Cytoplasmic segment spans residues 121-139 (DRFVAICHPLHYAKIMSLR). A helical membrane pass occupies residues 140–158 (LCRLLVGALWAFSCFISLT). The Extracellular segment spans residues 159–196 (HILLMARLVFCGSHEVPHYFCDLTPILRLSCTDTSVNR). The chain crosses the membrane as a helical span at residues 197–219 (IFILIVAGMVIATPFVCILASYA). Over 220–236 (RILVAIMKVPSAGGRKK) the chain is Cytoplasmic. A helical membrane pass occupies residues 237 to 259 (AFSTCSSHLSVVALFYGTTIGVY). The Extracellular portion of the chain corresponds to 260–272 (LCPSSVLTTVKEK). The helical transmembrane segment at 273-292 (ASAVMYTAVTPMLNPFIYSL) threads the bilayer. At 293–313 (RNRDLKGALRKLVNRKITSSS) the chain is on the cytoplasmic side.

The protein belongs to the G-protein coupled receptor 1 family.

It localises to the cell membrane. In terms of biological role, odorant receptor. The protein is Olfactory receptor 1M1 of Homo sapiens (Human).